The following is a 76-amino-acid chain: Large ribosomal subunit protein uL30 (76 aa).

The protein belongs to the universal ribosomal protein uL30 family. As to quaternary structure, part of the 50S ribosomal subunit.

The polypeptide is Large ribosomal subunit protein uL30 (Anaeromyxobacter dehalogenans (strain 2CP-1 / ATCC BAA-258)).